The primary structure comprises 92 residues: Small ribosomal subunit protein bS20 (92 aa).

Positions methionine 1–arginine 25 are disordered.

It belongs to the bacterial ribosomal protein bS20 family.

Functionally, binds directly to 16S ribosomal RNA. The polypeptide is Small ribosomal subunit protein bS20 (Paraburkholderia phytofirmans (strain DSM 17436 / LMG 22146 / PsJN) (Burkholderia phytofirmans)).